The chain runs to 207 residues: Coiled-coil domain-containing protein 25 (207 aa).

Topologically, residues 1–104 are extracellular; that stretch reads MVFYFTSAVV…SNLKKTADMD (104 aa). The interval 20 to 24 is DNA-binding; it reads KDKYE. A helical transmembrane segment spans residues 105–121; the sequence is IGQIGFHRQKEVKIVAV. Positions 112-189 form a coiled coil; it reads RQKEVKIVAV…EDLKNYTSLM (78 aa). Residues 122 to 207 lie on the Cytoplasmic side of the membrane; sequence EKKINEIVNR…EDGYDSDDFM (86 aa). The span at 140-183 shows a compositional bias: basic and acidic residues; it reads YPDLAAEKESRDREERNEKKAQIQEQKKKEKEEVKKKKEMEDLK. The disordered stretch occupies residues 140–207; that stretch reads YPDLAAEKES…EDGYDSDDFM (68 aa). A compositionally biased stretch (polar residues) spans 184–198; it reads NYTSLMKSDNMTTNE. A Phosphoserine modification is found at S203.

Belongs to the CCDC25 family. In terms of assembly, interacts (via cytoplasmic region) with ILK.

It localises to the cell membrane. The protein localises to the endomembrane system. In terms of biological role, transmembrane receptor that senses neutrophil extracellular traps (NETs) and triggers the ILK-PARVB pathway to enhance cell motility. NETs are mainly composed of DNA fibers and are released by neutrophils to bind pathogens during inflammation. Specifically binds NETs on its extracellular region, in particular the 8-OHdG-enriched DNA present in NETs, and recruits ILK, initiating the ILK-PARVB cascade to induce cytoskeleton rearrangement and directional migration of cells. The sequence is that of Coiled-coil domain-containing protein 25 from Danio rerio (Zebrafish).